The sequence spans 198 residues: Probable GTP-binding protein EngB (198 aa).

Residues serine 36–glutamate 198 enclose the EngB-type G domain. Residues glycine 44 to serine 51, glycine 70 to leucine 74, aspartate 88 to glycine 91, asparagine 155 to aspartate 158, and isoleucine 182 to alanine 184 contribute to the GTP site. Residues serine 51 and threonine 72 each contribute to the Mg(2+) site.

This sequence belongs to the TRAFAC class TrmE-Era-EngA-EngB-Septin-like GTPase superfamily. EngB GTPase family. It depends on Mg(2+) as a cofactor.

In terms of biological role, necessary for normal cell division and for the maintenance of normal septation. In Mesomycoplasma hyopneumoniae (strain J / ATCC 25934 / NCTC 10110) (Mycoplasma hyopneumoniae), this protein is Probable GTP-binding protein EngB.